The sequence spans 240 residues: 2,3-bisphosphoglycerate-dependent phosphoglycerate mutase 2 (240 aa).

Substrate is bound by residues 8–15 (RHGQSEWN), 21–22 (TG), arginine 60, 87–90 (ERHY), lysine 98, 114–115 (RR), and 183–184 (GN). The active-site Tele-phosphohistidine intermediate is the histidine 9. Glutamate 87 functions as the Proton donor/acceptor in the catalytic mechanism.

Belongs to the phosphoglycerate mutase family. BPG-dependent PGAM subfamily.

It carries out the reaction (2R)-2-phosphoglycerate = (2R)-3-phosphoglycerate. It participates in carbohydrate degradation; glycolysis; pyruvate from D-glyceraldehyde 3-phosphate: step 3/5. Catalyzes the interconversion of 2-phosphoglycerate and 3-phosphoglycerate. This chain is 2,3-bisphosphoglycerate-dependent phosphoglycerate mutase 2, found in Bacillus cereus (strain ATCC 10987 / NRS 248).